A 274-amino-acid polypeptide reads, in one-letter code: Shikimate dehydrogenase (NADP(+)) (274 aa).

Residues 14–16 (SKS) and threonine 61 each bind shikimate. The active-site Proton acceptor is the lysine 65. Shikimate is bound by residues asparagine 86 and aspartate 102. Residues 126–130 (GAGGA), 150–155 (NRTAEK), and methionine 214 contribute to the NADP(+) site. Tyrosine 216 contacts shikimate. Residue glycine 239 participates in NADP(+) binding.

The protein belongs to the shikimate dehydrogenase family. In terms of assembly, homodimer.

It catalyses the reaction shikimate + NADP(+) = 3-dehydroshikimate + NADPH + H(+). Its pathway is metabolic intermediate biosynthesis; chorismate biosynthesis; chorismate from D-erythrose 4-phosphate and phosphoenolpyruvate: step 4/7. Functionally, involved in the biosynthesis of the chorismate, which leads to the biosynthesis of aromatic amino acids. Catalyzes the reversible NADPH linked reduction of 3-dehydroshikimate (DHSA) to yield shikimate (SA). This chain is Shikimate dehydrogenase (NADP(+)), found in Pseudoalteromonas translucida (strain TAC 125).